A 264-amino-acid chain; its full sequence is Apolipoprotein A-I (264 aa).

Positions methionine 1–alanine 18 are cleaved as a signal peptide. Tandem repeats lie at residues leucine 67 to glycine 88 and histidine 89 to asparagine 110. The tract at residues leucine 67–glutamine 264 is 10 X approximate tandem repeats. Position 109 is a methionine sulfoxide (methionine 109). The stretch at lysine 111–glutamine 121 is one 3; half-length repeat. Repeat copies occupy residues proline 122 to glutamate 143, proline 144 to glycine 165, and proline 166 to arginine 187. One copy of the 7; truncated repeat lies at threonine 188–serine 207. Methionine 193 carries the post-translational modification Methionine sulfoxide. Copy 8 of the repeat occupies threonine 208–lysine 229. A 9; half-length repeat occupies proline 230–leucine 240. Copy 10 of the repeat occupies proline 241–glutamine 264.

It belongs to the apolipoprotein A1/A4/E family. In terms of assembly, homodimer. Interacts with APOA1BP and CLU. Component of a sperm activating protein complex (SPAP), consisting of APOA1, an immunoglobulin heavy chain, an immunoglobulin light chain and albumin. Interacts with NDRG1. Interacts with SCGB3A2. Interacts with NAXE and YJEFN3. Glycosylated. In terms of processing, palmitoylated. Post-translationally, phosphorylation sites are present in the extracellular medium.

It is found in the secreted. Functionally, participates in the reverse transport of cholesterol from tissues to the liver for excretion by promoting cholesterol efflux from tissues and by acting as a cofactor for the lecithin cholesterol acyltransferase (LCAT). As part of the SPAP complex, activates spermatozoa motility. The sequence is that of Apolipoprotein A-I (Apoa1) from Fukomys damarensis (Damaraland mole rat).